The following is a 341-amino-acid chain: Heterogeneous nuclear ribonucleoproteins A2/B1 (341 aa).

RRM domains follow at residues 9–92 (RKLF…ESGK) and 100–179 (KKLF…LSRQ). Lys10 participates in a covalent cross-link: Glycyl lysine isopeptide (Lys-Gly) (interchain with G-Cter in SUMO2). Ser17 bears the Phosphoserine mark. Residue Arg26 is modified to Omega-N-methylarginine. Residue Ser73 is modified to Phosphoserine. Lys92 carries the N6,N6-dimethyllysine; alternate modification. Lys92 participates in a covalent cross-link: Glycyl lysine isopeptide (Lys-Gly) (interchain with G-Cter in SUMO2); alternate. Glycyl lysine isopeptide (Lys-Gly) (interchain with G-Cter in SUMO2) cross-links involve residues Lys100, Lys108, and Lys125. Phosphothreonine is present on Thr128. Ser137 carries the post-translational modification Phosphoserine. A Glycyl lysine isopeptide (Lys-Gly) (interchain with G-Cter in SUMO2) cross-link involves residue Lys140. Thr147 bears the Phosphothreonine mark. Glycyl lysine isopeptide (Lys-Gly) (interchain with G-Cter in SUMO2); alternate cross-links involve residues Lys156 and Lys161. An N6-acetyllysine; alternate mark is found at Lys156 and Lys161. Position 164 is a phosphothreonine (Thr164). A Glycyl lysine isopeptide (Lys-Gly) (interchain with G-Cter in SUMO2) cross-link involves residue Lys174. Residues Ser177 and Ser189 each carry the phosphoserine modification. The disordered stretch occupies residues 181 to 341 (MQEVQSSRSG…SGGYGGRSRY (161 aa)). Gly residues predominate over residues 190 to 211 (GRGGNFGFGDSRGGGGNFGPGP). At Arg191 the chain carries Asymmetric dimethylarginine; alternate. Arg191 is modified (dimethylated arginine; alternate). An Omega-N-methylarginine; alternate modification is found at Arg191. At Ser200 the chain carries Phosphoserine. At Arg201 the chain carries Asymmetric dimethylarginine; alternate. Arg201 carries the dimethylated arginine; alternate modification. Arg201 bears the Omega-N-methylarginine; alternate mark. Ser213 bears the Phosphoserine mark. Arg216 carries the post-translational modification Omega-N-methylarginine. A phosphoserine mark is found at Ser219 and Ser224. Position 226 is an omega-N-methylarginine (Arg226). Ser247 is modified (phosphoserine). Position 254 is an asymmetric dimethylarginine; alternate (Arg254). Arg254 is subject to Omega-N-methylarginine; alternate. A nuclear targeting sequence region spans residues 296–335 (QQPSNYGPMKSGNFGGSRNMGGPYGGGNYGPGGSGGSGGY). Residues 308-341 (NFGGSRNMGGPYGGGNYGPGGSGGSGGYGGRSRY) are compositionally biased toward gly residues. Ser312 bears the Phosphoserine mark. The residue at position 313 (Arg313) is an Omega-N-methylarginine. Position 319 is a phosphotyrosine (Tyr319). Phosphoserine occurs at positions 329 and 332. Tyr335 carries the post-translational modification Phosphotyrosine. Omega-N-methylarginine is present on Arg338.

In terms of assembly, identified in the spliceosome C complex. Identified in a IGF2BP1-dependent mRNP granule complex containing untranslated mRNAs. Interacts with IGF2BP1. Interacts with C9orf72. Interacts with DGCR8. Interacts with TARDBP. Interacts with CKAP5. Interacts with PPIA/CYPA. Interacts (via C-terminus) with FAM76B; the interaction results in retention of HNRNPA2B1 in the nucleus and inhibition of the NF-kappa-B-mediated inflammatory pathway. Interacts with NF-kappa-B inhibitors NFKBIA and NFKBIE; the interaction may be mediated by the RRM2 domain of HNRNPA2B1, and HNRNPA2B1 may interact simultaneously with FAM76B and either NFKBIA or NFKBIE to form a complex. Post-translationally, sumoylated in exosomes, promoting miRNAs-binding. In terms of processing, asymmetric dimethylation at Arg-254 constitutes the major methylation site. According to a report, methylation affects subcellular location and promotes nuclear localization. According to another report, methylation at Arg-254 does not influence nucleocytoplasmic shuttling.

The protein resides in the nucleus. It localises to the nucleoplasm. It is found in the cytoplasmic granule. The protein localises to the secreted. Its subcellular location is the extracellular exosome. Functionally, heterogeneous nuclear ribonucleoprotein (hnRNP) that associates with nascent pre-mRNAs, packaging them into hnRNP particles. The hnRNP particle arrangement on nascent hnRNA is non-random and sequence-dependent and serves to condense and stabilize the transcripts and minimize tangling and knotting. Packaging plays a role in various processes such as transcription, pre-mRNA processing, RNA nuclear export, subcellular location, mRNA translation and stability of mature mRNAs. Forms hnRNP particles with at least 20 other different hnRNP and heterogeneous nuclear RNA in the nucleus. Involved in transport of specific mRNAs to the cytoplasm in oligodendrocytes and neurons: acts by specifically recognizing and binding the A2RE (21 nucleotide hnRNP A2 response element) or the A2RE11 (derivative 11 nucleotide oligonucleotide) sequence motifs present on some mRNAs, and promotes their transport to the cytoplasm. Specifically binds single-stranded telomeric DNA sequences, protecting telomeric DNA repeat against endonuclease digestion. Also binds other RNA molecules, such as primary miRNA (pri-miRNAs): acts as a nuclear 'reader' of the N6-methyladenosine (m6A) mark by specifically recognizing and binding a subset of nuclear m6A-containing pri-miRNAs. Binding to m6A-containing pri-miRNAs promotes pri-miRNA processing by enhancing binding of DGCR8 to pri-miRNA transcripts. Involved in miRNA sorting into exosomes following sumoylation, possibly by binding (m6A)-containing pre-miRNAs. Acts as a regulator of efficiency of mRNA splicing, possibly by binding to m6A-containing pre-mRNAs. Plays a role in the splicing of pyruvate kinase PKM by binding repressively to sequences flanking PKM exon 9, inhibiting exon 9 inclusion and resulting in exon 10 inclusion and production of the PKM M2 isoform. This Saguinus oedipus (Cotton-top tamarin) protein is Heterogeneous nuclear ribonucleoproteins A2/B1 (HNRNPA2B1).